The chain runs to 185 residues: Ribosome-recycling factor (185 aa).

It belongs to the RRF family.

The protein resides in the cytoplasm. Responsible for the release of ribosomes from messenger RNA at the termination of protein biosynthesis. May increase the efficiency of translation by recycling ribosomes from one round of translation to another. This Bacillus licheniformis (strain ATCC 14580 / DSM 13 / JCM 2505 / CCUG 7422 / NBRC 12200 / NCIMB 9375 / NCTC 10341 / NRRL NRS-1264 / Gibson 46) protein is Ribosome-recycling factor.